We begin with the raw amino-acid sequence, 439 residues long: Probable non-inhibitory serpin-Z9 (439 aa).

The segment at 12-44 (RRPPFPAGDANHRRLSSAPAPKPEAPAEAMPPP) is disordered. Residues 31-44 (APKPEAPAEAMPPP) are compositionally biased toward pro residues. An RCL region spans residues 389 to 413 (GIEETSVSMGLGKPLPAQHFKADHP).

This sequence belongs to the serpin family.

The polypeptide is Probable non-inhibitory serpin-Z9 (Oryza sativa subsp. japonica (Rice)).